The chain runs to 239 residues: uncharacterized protein (239 aa).

4 helical membrane-spanning segments follow: residues 9–29 (LAIY…SQII), 65–85 (IIYL…YLFI), 94–114 (IILI…TFVV), and 167–187 (IYFA…MHWI).

Its subcellular location is the cell membrane. This is an uncharacterized protein from Methanocaldococcus jannaschii (strain ATCC 43067 / DSM 2661 / JAL-1 / JCM 10045 / NBRC 100440) (Methanococcus jannaschii).